The chain runs to 256 residues: Deoxyribose-phosphate aldolase (256 aa).

D102 acts as the Proton donor/acceptor in catalysis. The Schiff-base intermediate with acetaldehyde role is filled by K165. K197 functions as the Proton donor/acceptor in the catalytic mechanism.

It belongs to the DeoC/FbaB aldolase family. DeoC type 2 subfamily.

It is found in the cytoplasm. The enzyme catalyses 2-deoxy-D-ribose 5-phosphate = D-glyceraldehyde 3-phosphate + acetaldehyde. It participates in carbohydrate degradation; 2-deoxy-D-ribose 1-phosphate degradation; D-glyceraldehyde 3-phosphate and acetaldehyde from 2-deoxy-alpha-D-ribose 1-phosphate: step 2/2. Catalyzes a reversible aldol reaction between acetaldehyde and D-glyceraldehyde 3-phosphate to generate 2-deoxy-D-ribose 5-phosphate. The protein is Deoxyribose-phosphate aldolase of Shewanella sp. (strain MR-7).